Reading from the N-terminus, the 182-residue chain is Protein YIPF6 homolog (182 aa).

Over 1–45 (MIESENPNTLDEPVIQTILRDLKMIGFKLYHVILPRGNAANVLRD) the chain is Cytoplasmic. A helical membrane pass occupies residues 46-66 (WDLWGPLILCLVMAIFLSISA). At 67–70 (EEQK) the chain is on the lumenal side. A helical transmembrane segment spans residues 71–91 (ALEFTIVFVVVWCGAAIVTVN). Residues 92–104 (GQLLCGNISFFQS) lie on the Cytoplasmic side of the membrane. A helical transmembrane segment spans residues 105–125 (VCILGYCIFPLTIATIIIWII). Over 126-133 (QNFTMIVK) the chain is Lumenal. Residues 134 to 154 (LPIVGGAWFWSSFASYGFLGS) traverse the membrane as a helical segment. The Cytoplasmic segment spans residues 155-161 (SVPESRR). Residues 162-182 (LLAVYPVLLFYLVIAWLVVVQ) form a helical membrane-spanning segment.

It belongs to the YIP1 family.

The protein localises to the golgi apparatus membrane. The sequence is that of Protein YIPF6 homolog (yipf6) from Dictyostelium discoideum (Social amoeba).